The primary structure comprises 305 residues: Homoserine O-acetyltransferase (305 aa).

The active-site Acyl-thioester intermediate is the Cys-142. Substrate-binding residues include Lys-163 and Ser-192. His-235 acts as the Proton acceptor in catalysis. Glu-237 is an active-site residue. A substrate-binding site is contributed by Arg-249.

Belongs to the MetA family.

The protein localises to the cytoplasm. It carries out the reaction L-homoserine + acetyl-CoA = O-acetyl-L-homoserine + CoA. It participates in amino-acid biosynthesis; L-methionine biosynthesis via de novo pathway; O-acetyl-L-homoserine from L-homoserine: step 1/1. Transfers an acetyl group from acetyl-CoA to L-homoserine, forming acetyl-L-homoserine. The sequence is that of Homoserine O-acetyltransferase from Roseobacter denitrificans (strain ATCC 33942 / OCh 114) (Erythrobacter sp. (strain OCh 114)).